We begin with the raw amino-acid sequence, 506 residues long: Glutamyl-tRNA(Gln) amidotransferase subunit A, mitochondrial (506 aa).

Active-site charge relay system residues include Lys62 and Ser141. Ser165 acts as the Acyl-ester intermediate in catalysis.

Belongs to the amidase family. GatA subfamily. In terms of assembly, subunit of the heterotrimeric GatCAB amidotransferase (AdT) complex, composed of A, B and C subunits.

The protein localises to the mitochondrion. The enzyme catalyses L-glutamyl-tRNA(Gln) + L-glutamine + ATP + H2O = L-glutaminyl-tRNA(Gln) + L-glutamate + ADP + phosphate + H(+). Its function is as follows. Allows the formation of correctly charged Gln-tRNA(Gln) through the transamidation of misacylated Glu-tRNA(Gln) in the mitochondria. The reaction takes place in the presence of glutamine and ATP through an activated gamma-phospho-Glu-tRNA(Gln). The polypeptide is Glutamyl-tRNA(Gln) amidotransferase subunit A, mitochondrial (Emericella nidulans (strain FGSC A4 / ATCC 38163 / CBS 112.46 / NRRL 194 / M139) (Aspergillus nidulans)).